A 452-amino-acid polypeptide reads, in one-letter code: Neuromedin-K receptor (452 aa).

The Extracellular portion of the chain corresponds to 1–71; it reads MASVPRGENW…TNQFVQPSWR (71 aa). 4 N-linked (GlcNAc...) asparagine glycosylation sites follow: asparagine 9, asparagine 23, asparagine 40, and asparagine 60. Residues 72–94 traverse the membrane as a helical segment; sequence IALWSLAYGLVVAVAVFGNLIVI. Residues 95-104 lie on the Cytoplasmic side of the membrane; that stretch reads WIILAHKRMR. The helical transmembrane segment at 105–126 threads the bilayer; it reads TVTNYFLVNLAFSDASVAAFNT. The Extracellular portion of the chain corresponds to 127–146; that stretch reads LINFIYGLHSEWYFGANYCR. Cysteine 145 and cysteine 220 are joined by a disulfide. Residues 147-168 form a helical membrane-spanning segment; that stretch reads FQNFFPITAVFASIYSMTAIAV. At 169-188 the chain is on the cytoplasmic side; it reads DRYMAIIDPLKPRLSATATK. Residues 189-209 traverse the membrane as a helical segment; that stretch reads IVIGSIWILAFLLAFPQCLYS. Over 210–232 the chain is Extracellular; the sequence is KIKVMPGRTLCYVQWPEGPKQHF. The chain crosses the membrane as a helical span at residues 233-257; sequence TYHIIVIILVYCFPLLIMGVTYTIV. The Cytoplasmic portion of the chain corresponds to 258–286; it reads GITLWGGEIPGDTCDKYHEQLKAKRKVVK. A helical membrane pass occupies residues 287–308; sequence MMIIVVVTFAICWLPYHVYFIL. Residues 309 to 321 are Extracellular-facing; the sequence is TAIYQQLNRWKYI. Residues 322–346 form a helical membrane-spanning segment; that stretch reads QQVYLASFWLAMSSTMYNPIIYCCL. At 347 to 452 the chain is on the cytoplasmic side; that stretch reads NKRFRAGFKR…SPYTSVDEYS (106 aa). The S-palmitoyl cysteine moiety is linked to residue cysteine 361. The tract at residues 400–452 is disordered; it reads FDPNDGDPTKSSRKKRAVPRDPSANGCSHRGSKSASTTSSFISSPYTSVDEYS. A compositionally biased stretch (low complexity) spans 432–452; that stretch reads KSASTTSSFISSPYTSVDEYS.

This sequence belongs to the G-protein coupled receptor 1 family. The anchoring of this receptor to the plasma membrane is probably mediated by the palmitoylation of a cysteine residue.

It is found in the cell membrane. Functionally, this is a receptor for the tachykinin neuropeptide neuromedin-K (neurokinin B). It is associated with G proteins that activate a phosphatidylinositol-calcium second messenger system. The rank order of affinity of this receptor to tachykinins is: neuromedin-K &gt; substance K &gt; substance P. The polypeptide is Neuromedin-K receptor (Tacr3) (Rattus norvegicus (Rat)).